The chain runs to 730 residues: Ribosomal RNA large subunit methyltransferase K/L (730 aa).

Positions 46–157 constitute a THUMP domain; it reads TAYRLCVWSR…RGEAILSLDL (112 aa). The interval 394–418 is disordered; that stretch reads GERREAQPEGTEARQQVPQASEPAR.

Belongs to the methyltransferase superfamily. RlmKL family.

The protein resides in the cytoplasm. It carries out the reaction guanosine(2445) in 23S rRNA + S-adenosyl-L-methionine = N(2)-methylguanosine(2445) in 23S rRNA + S-adenosyl-L-homocysteine + H(+). It catalyses the reaction guanosine(2069) in 23S rRNA + S-adenosyl-L-methionine = N(2)-methylguanosine(2069) in 23S rRNA + S-adenosyl-L-homocysteine + H(+). In terms of biological role, specifically methylates the guanine in position 2445 (m2G2445) and the guanine in position 2069 (m7G2069) of 23S rRNA. The sequence is that of Ribosomal RNA large subunit methyltransferase K/L from Pseudomonas putida (strain ATCC 700007 / DSM 6899 / JCM 31910 / BCRC 17059 / LMG 24140 / F1).